The primary structure comprises 231 residues: Deoxyribose-phosphate aldolase (231 aa).

The active-site Proton donor/acceptor is the aspartate 86. The active-site Schiff-base intermediate with acetaldehyde is lysine 147. Lysine 172 (proton donor/acceptor) is an active-site residue. Positions 206 to 231 are disordered; the sequence is WQAETAGETVTEPESDRDGADTTDGY.

This sequence belongs to the DeoC/FbaB aldolase family. DeoC type 1 subfamily.

It localises to the cytoplasm. The catalysed reaction is 2-deoxy-D-ribose 5-phosphate = D-glyceraldehyde 3-phosphate + acetaldehyde. It functions in the pathway carbohydrate degradation; 2-deoxy-D-ribose 1-phosphate degradation; D-glyceraldehyde 3-phosphate and acetaldehyde from 2-deoxy-alpha-D-ribose 1-phosphate: step 2/2. Catalyzes a reversible aldol reaction between acetaldehyde and D-glyceraldehyde 3-phosphate to generate 2-deoxy-D-ribose 5-phosphate. This chain is Deoxyribose-phosphate aldolase, found in Haloarcula marismortui (strain ATCC 43049 / DSM 3752 / JCM 8966 / VKM B-1809) (Halobacterium marismortui).